The following is a 98-amino-acid chain: uncharacterized protein (98 aa).

Belongs to the HesB/IscA family.

This is an uncharacterized protein from Staphylococcus saprophyticus subsp. saprophyticus (strain ATCC 15305 / DSM 20229 / NCIMB 8711 / NCTC 7292 / S-41).